Consider the following 584-residue polypeptide: Arginine--tRNA ligase (584 aa).

Positions 126–136 match the 'HIGH' region motif; the sequence is PNIAKEMHVGH.

Belongs to the class-I aminoacyl-tRNA synthetase family. Monomer.

Its subcellular location is the cytoplasm. It carries out the reaction tRNA(Arg) + L-arginine + ATP = L-arginyl-tRNA(Arg) + AMP + diphosphate. In Synechococcus elongatus (strain ATCC 33912 / PCC 7942 / FACHB-805) (Anacystis nidulans R2), this protein is Arginine--tRNA ligase.